Reading from the N-terminus, the 198-residue chain is GTP cyclohydrolase-2 (198 aa).

GTP is bound at residue 52–56; that stretch reads RMHSE. 3 residues coordinate Zn(2+): C57, C68, and C70. Residues Q73, 94–96, and T116 contribute to the GTP site; that span reads EGR. The active-site Proton acceptor is the D128. R130 serves as the catalytic Nucleophile. GTP-binding residues include T151 and K156.

The protein belongs to the GTP cyclohydrolase II family. Requires Zn(2+) as cofactor.

The catalysed reaction is GTP + 4 H2O = 2,5-diamino-6-hydroxy-4-(5-phosphoribosylamino)-pyrimidine + formate + 2 phosphate + 3 H(+). The protein operates within cofactor biosynthesis; riboflavin biosynthesis; 5-amino-6-(D-ribitylamino)uracil from GTP: step 1/4. Catalyzes the conversion of GTP to 2,5-diamino-6-ribosylamino-4(3H)-pyrimidinone 5'-phosphate (DARP), formate and pyrophosphate. This is GTP cyclohydrolase-2 from Vibrio vulnificus (strain CMCP6).